The chain runs to 338 residues: GTPase Obg (338 aa).

Residues 1–159 (MSFIDEVKIH…RWLRLELKLM (159 aa)) form the Obg domain. The OBG-type G domain maps to 160–331 (ADVGLLGMPS…LLDEIARNLW (172 aa)). GTP is bound by residues 166-173 (GMPSVGKS), 191-195 (FTTLK), 213-216 (DIPG), 283-286 (NKID), and 312-314 (SAA). Ser173 and Thr193 together coordinate Mg(2+).

This sequence belongs to the TRAFAC class OBG-HflX-like GTPase superfamily. OBG GTPase family. Monomer. It depends on Mg(2+) as a cofactor.

It localises to the cytoplasm. Functionally, an essential GTPase which binds GTP, GDP and possibly (p)ppGpp with moderate affinity, with high nucleotide exchange rates and a fairly low GTP hydrolysis rate. Plays a role in control of the cell cycle, stress response, ribosome biogenesis and in those bacteria that undergo differentiation, in morphogenesis control. The sequence is that of GTPase Obg from Geotalea uraniireducens (strain Rf4) (Geobacter uraniireducens).